The sequence spans 41 residues: Large ribosomal subunit protein bL36 (41 aa).

Belongs to the bacterial ribosomal protein bL36 family.

The sequence is that of Large ribosomal subunit protein bL36 from Granulibacter bethesdensis (strain ATCC BAA-1260 / CGDNIH1).